The sequence spans 402 residues: mRNA-capping enzyme subunit alpha (402 aa).

The N6-GMP-lysine intermediate role is filled by lysine 66.

The protein belongs to the eukaryotic GTase family. In terms of assembly, heterodimer. The mRNA-capping enzyme is composed of two separate chains alpha and beta, respectively a mRNA guanylyltransferase and an mRNA 5'-triphosphate monophosphatase.

It is found in the nucleus. It carries out the reaction a 5'-end diphospho-ribonucleoside in mRNA + GTP + H(+) = a 5'-end (5'-triphosphoguanosine)-ribonucleoside in mRNA + diphosphate. Second step of mRNA capping. Transfer of the GMP moiety of GTP to the 5'-end of RNA via an enzyme-GMP covalent reaction intermediate. The protein is mRNA-capping enzyme subunit alpha (rnp-2) of Neurospora crassa (strain ATCC 24698 / 74-OR23-1A / CBS 708.71 / DSM 1257 / FGSC 987).